We begin with the raw amino-acid sequence, 123 residues long: Large ribosomal subunit protein uL29 (123 aa).

Belongs to the universal ribosomal protein uL29 family. In terms of assembly, component of the large ribosomal subunit.

Its subcellular location is the cytoplasm. Its function is as follows. Component of the large ribosomal subunit. The ribosome is a large ribonucleoprotein complex responsible for the synthesis of proteins in the cell. The polypeptide is Large ribosomal subunit protein uL29 (rpl35) (Ictalurus punctatus (Channel catfish)).